Consider the following 409-residue polypeptide: NADH-ubiquinone oxidoreductase chain 4 (409 aa).

Helical transmembrane passes span 10–30 (LWLF…FLIF), 44–64 (SYSF…IVIS), 76–96 (ILVF…LYMF), 98–118 (ELSM…IEKI), 120–140 (SSYY…FVYF), 160–180 (FFIL…HLWL), 194–214 (LLAG…LGSL), 221–241 (VWIL…VFQS), 245–265 (ALAA…LVFI), 271–291 (ISSV…FYLI), 305–325 (FMSS…VVFL), 353–373 (MFVM…FLIT), and 389–409 (VGFS…SVFY).

The protein belongs to the complex I subunit 4 family.

It localises to the mitochondrion membrane. The catalysed reaction is a ubiquinone + NADH + 5 H(+)(in) = a ubiquinol + NAD(+) + 4 H(+)(out). Its function is as follows. Core subunit of the mitochondrial membrane respiratory chain NADH dehydrogenase (Complex I) that is believed to belong to the minimal assembly required for catalysis. Complex I functions in the transfer of electrons from NADH to the respiratory chain. The immediate electron acceptor for the enzyme is believed to be ubiquinone. The protein is NADH-ubiquinone oxidoreductase chain 4 of Caenorhabditis elegans.